The chain runs to 151 residues: Meiotically up-regulated gene 114 protein (151 aa).

The protein resides in the cytoplasm. Functionally, has a role in meiosis. The polypeptide is Meiotically up-regulated gene 114 protein (mug114) (Schizosaccharomyces pombe (strain 972 / ATCC 24843) (Fission yeast)).